We begin with the raw amino-acid sequence, 433 residues long: 23S rRNA (uracil(1939)-C(5))-methyltransferase RlmD (433 aa).

The TRAM domain maps to 10 to 68; it reads RTTTRQIITVSVNDLDSFGQGVARHNGKTLFIPGLLSQENAEVTVTEDKKQYARAKVVR. [4Fe-4S] cluster contacts are provided by Cys81, Cys87, Cys90, and Cys162. S-adenosyl-L-methionine is bound by residues Gln265, Phe294, Asn299, Glu315, Asn342, and Asp363. Catalysis depends on Cys389, which acts as the Nucleophile.

Belongs to the class I-like SAM-binding methyltransferase superfamily. RNA M5U methyltransferase family. RlmD subfamily.

It catalyses the reaction uridine(1939) in 23S rRNA + S-adenosyl-L-methionine = 5-methyluridine(1939) in 23S rRNA + S-adenosyl-L-homocysteine + H(+). Catalyzes the formation of 5-methyl-uridine at position 1939 (m5U1939) in 23S rRNA. This chain is 23S rRNA (uracil(1939)-C(5))-methyltransferase RlmD, found in Shigella dysenteriae serotype 1 (strain Sd197).